The chain runs to 692 residues: Elongation factor G (692 aa).

In terms of domain architecture, tr-type G spans 8 to 282; sequence EKTRNIGIMA…AVIDYLPSPL (275 aa). Residues 17 to 24, 81 to 85, and 135 to 138 contribute to the GTP site; these read AHVDAGKT, DTPGH, and NKMD.

This sequence belongs to the TRAFAC class translation factor GTPase superfamily. Classic translation factor GTPase family. EF-G/EF-2 subfamily.

The protein resides in the cytoplasm. Catalyzes the GTP-dependent ribosomal translocation step during translation elongation. During this step, the ribosome changes from the pre-translocational (PRE) to the post-translocational (POST) state as the newly formed A-site-bound peptidyl-tRNA and P-site-bound deacylated tRNA move to the P and E sites, respectively. Catalyzes the coordinated movement of the two tRNA molecules, the mRNA and conformational changes in the ribosome. The polypeptide is Elongation factor G (Streptococcus agalactiae serotype Ia (strain ATCC 27591 / A909 / CDC SS700)).